A 166-amino-acid polypeptide reads, in one-letter code: uncharacterized protein (166 aa).

A run of 3 helical transmembrane segments spans residues 4–24 (LNIF…EASI), 101–121 (LITC…SEAI), and 146–166 (SWSS…QCFL).

Its subcellular location is the membrane. This is an uncharacterized protein from Saccharomyces cerevisiae (strain ATCC 204508 / S288c) (Baker's yeast).